Reading from the N-terminus, the 292-residue chain is 4,5:9,10-diseco-3-hydroxy-5,9,17-trioxoandrosta-1(10),2-diene-4-oate hydrolase (292 aa).

Substrate contacts are provided by residues 44–45, asparagine 53, asparagine 113, and arginine 192; that span reads GG. Histidine 269 acts as the Proton acceptor in catalysis. Tryptophan 270 is a substrate binding site.

It belongs to the AB hydrolase superfamily. HsaD family. Homodimer.

It catalyses the reaction (1E,2Z)-3-hydroxy-5,9,17-trioxo-4,5:9,10-disecoandrosta-1(10),2-dien-4-oate + H2O = 3-[(3aS,4S,7aS)-7a-methyl-1,5-dioxo-octahydro-1H-inden-4-yl]propanoate + (2Z,4Z)-2-hydroxyhexa-2,4-dienoate + H(+). It participates in lipid metabolism; steroid biosynthesis. Functionally, catalyzes the hydrolysis of a carbon-carbon bond in 4,5: 9,10-diseco-3-hydroxy-5,9,17-trioxoandrosta-1(10),2-diene-4-oate (4,9-DSHA) to yield 9,17-dioxo-1,2,3,4,10,19-hexanorandrostan-5-oate (DOHNAA) and 2-hydroxy-hexa-2,4-dienoate (HHD). Also involved in biphenyl and polychlorinated biphenyls (PCBs) degradation. The chain is 4,5:9,10-diseco-3-hydroxy-5,9,17-trioxoandrosta-1(10),2-diene-4-oate hydrolase (hsaD) from Rhodococcus jostii (strain RHA1).